We begin with the raw amino-acid sequence, 3241 residues long: PHD finger protein rhinoceros (3241 aa).

Residues 1–16 (MSQRGKRGNQQHHQSH) are compositionally biased toward basic residues. The disordered stretch occupies residues 1-126 (MSQRGKRGNQ…GASSSSSWQA (126 aa)). Low complexity-rich tracts occupy residues 42-55 (PPNG…AEVT) and 90-126 (RAAA…SWQA). A PHD-type 1 zinc finger spans residues 312-362 (NVICDVCRSPDSEEANEMVFCDNCNICVHQACYGITAIPSGQWLCRTCSMG). Residues 364 to 398 (KPDCVLCPNKGGAMKSNKSGKHWAHVSCALWIPEV) form a C2HC pre-PHD-type zinc finger. The PHD-type 2 zinc finger occupies 422–481 (LICVLCRKRVGSCIQCSVKPCKTAYHVTCAFQHGLEMRAIIEEGNAEDGVKLRSYCQKHS). Disordered regions lie at residues 482-501 (MSKG…ASVA), 508-554 (NRYG…ARAQ), 737-1266 (SGKQ…VATP), 1279-1483 (PQRQ…STKV), 1500-1613 (PKTN…SETR), and 1632-1746 (NLGA…QHLL). Residues 540-554 (KTELTSEERNQARAQ) show a composition bias toward basic and acidic residues. Residues 762–777 (KKLNNGILSSRTSSPE) show a composition bias toward polar residues. The segment covering 807–874 (KSSAAAATST…SGSSSAGSGV (68 aa)) has biased composition (low complexity). The span at 931–943 (ERCRNRQEPERGA) shows a compositional bias: basic and acidic residues. The span at 949 to 965 (QSKSVPNRSQASRSKPT) shows a compositional bias: polar residues. Positions 995–1007 (DADESVSSDESEE) are enriched in acidic residues. The span at 1019 to 1031 (STTTSGLATTGSA) shows a compositional bias: low complexity. The span at 1060-1075 (TVESNVSDSQNQQTIR) shows a compositional bias: polar residues. Residues 1087–1104 (TAATTSSTSQAASSTSKA) show a composition bias toward low complexity. 2 stretches are compositionally biased toward polar residues: residues 1117-1126 (IGNSTKTKPN) and 1151-1163 (NMRS…TLQP). The span at 1184 to 1211 (KVKDSSSRVSNEADKSSLEKVRPKEHLQ) shows a compositional bias: basic and acidic residues. Residues 1313 to 1327 (VTSATISGSGSSVPA) are compositionally biased toward polar residues. T1346 carries the phosphothreonine modification. S1352 carries the post-translational modification Phosphoserine. Residue T1364 is modified to Phosphothreonine. Positions 1382–1426 (SSSSSGDSESSSSSSSSGSSSSSGGSDSDSESQASNSENPSSREP) are enriched in low complexity. T1456 carries the post-translational modification Phosphothreonine. A compositionally biased stretch (polar residues) spans 1463-1483 (NVLNIPSTRSRQNSTTKSTKV). Residues 1541–1558 (SPEKTVSRCKSRAEESPK) are compositionally biased toward basic and acidic residues. Polar residues predominate over residues 1576–1594 (KGTSSLDKLLNKKQQQMNH). Positions 1599–1608 (TPPPISPTPP) are enriched in pro residues. Over residues 1664–1675 (TAPTRTQLSASA) the composition is skewed to polar residues. Residues 1688-1699 (PAAPLPASPTPT) are compositionally biased toward pro residues. The span at 1717–1731 (RRMRWRSRRRRRRRS) shows a compositional bias: basic residues. 2 coiled-coil regions span residues 1741–1770 (HTQH…ASKY) and 1893–1925 (SEED…KEAV). Disordered regions lie at residues 2037-2061 (LEKS…GQPA), 2124-2148 (AERR…PVVT), 2203-2227 (NNTN…TPNN), 2346-2454 (TPPV…GGVT), 2598-2629 (ATGT…PAPN), 2667-2691 (SEEV…ARSQ), 2768-2811 (NDDS…NSSS), 2832-2911 (GAGA…SVDE), 2964-3015 (NKRG…TTTM), 3042-3169 (KAET…EAAM), and 3184-3241 (VNVG…CEVR). Positions 2359–2381 (KRTSVSGSNLSKKQTHKSPQLPQ) are enriched in polar residues. Positions 2392–2402 (PLQPPTPPAPV) are enriched in pro residues. Residues 2430–2439 (GSGGSGAPGR) are compositionally biased toward gly residues. Composition is skewed to polar residues over residues 2598–2611 (ATGT…QHSG) and 2673–2689 (DSDS…SDAR). A compositionally biased stretch (polar residues) spans 2855-2865 (NNDNNGKTGAA). Basic and acidic residues predominate over residues 2876-2887 (KTLESSEDDHQA). 2 positions are modified to phosphoserine: S2880 and S2881. The segment covering 2899-2911 (ANETPSGVSSVDE) has biased composition (polar residues). Basic and acidic residues predominate over residues 2964-2974 (NKRGVVVKDGE). Residues 2984–3002 (KRPKSSKPKKEKKEKKRQK) show a composition bias toward basic residues. The segment covering 3003-3015 (QQQLILSSSTTTM) has biased composition (low complexity). Phosphoserine occurs at positions 3104 and 3110. 2 stretches are compositionally biased toward polar residues: residues 3115-3130 (LLNS…NTSP) and 3184-3197 (VNVG…NSLP). The span at 3198 to 3218 (SASGTGSASSNSCNSNSINNN) shows a compositional bias: low complexity. A compositionally biased stretch (gly residues) spans 3219–3230 (GSGGGRASGEGG).

Belongs to the JADE family.

The protein resides in the nucleus. Its function is as follows. May function as a negative regulator of the EGFR/Ras/MAPK signaling pathway during eye development. This chain is PHD finger protein rhinoceros (rno), found in Drosophila melanogaster (Fruit fly).